The following is a 550-amino-acid chain: Aspartate--tRNA ligase (550 aa).

Glu162 contributes to the L-aspartate binding site. The tract at residues 186–189 is aspartate; that stretch reads QIYK. Arg208 contributes to the L-aspartate binding site. ATP is bound by residues 208 to 210 and Gln217; that span reads RDE. An L-aspartate-binding site is contributed by His417. Residue Glu451 participates in ATP binding. Arg458 contacts L-aspartate. 499-502 lines the ATP pocket; that stretch reads GIDR.

It belongs to the class-II aminoacyl-tRNA synthetase family. Type 1 subfamily. As to quaternary structure, homodimer.

It localises to the cytoplasm. It carries out the reaction tRNA(Asp) + L-aspartate + ATP = L-aspartyl-tRNA(Asp) + AMP + diphosphate. In terms of biological role, catalyzes the attachment of L-aspartate to tRNA(Asp) in a two-step reaction: L-aspartate is first activated by ATP to form Asp-AMP and then transferred to the acceptor end of tRNA(Asp). The protein is Aspartate--tRNA ligase of Mycoplasma genitalium (strain ATCC 33530 / DSM 19775 / NCTC 10195 / G37) (Mycoplasmoides genitalium).